We begin with the raw amino-acid sequence, 57 residues long: uncharacterized protein (57 aa).

The helical transmembrane segment at 24-44 (LWVTLLLTMFFTAVEIIGGLI) threads the bilayer.

The protein to cation A.eutrophus efflux system protein CzcD.

The protein localises to the cell membrane. This is an uncharacterized protein from Bacillus caldolyticus.